A 121-amino-acid polypeptide reads, in one-letter code: Large ribosomal subunit protein uL18 (121 aa).

Positions 63–88 (AAIRPDPSPKKSQKQPPKTHKRYNLK) are disordered. Basic residues predominate over residues 73–87 (KSQKQPPKTHKRYNL).

Belongs to the universal ribosomal protein uL18 family. As to quaternary structure, component of the large ribosomal subunit (LSU).

The protein localises to the cytoplasm. It is found in the nucleus. Its function is as follows. Component of the ribosome, a large ribonucleoprotein complex responsible for the synthesis of proteins in the cell. The small ribosomal subunit (SSU) binds messenger RNAs (mRNAs) and translates the encoded message by selecting cognate aminoacyl-transfer RNA (tRNA) molecules. The large subunit (LSU) contains the ribosomal catalytic site termed the peptidyl transferase center (PTC), which catalyzes the formation of peptide bonds, thereby polymerizing the amino acids delivered by tRNAs into a polypeptide chain. The nascent polypeptides leave the ribosome through a tunnel in the LSU and interact with protein factors that function in enzymatic processing, targeting, and the membrane insertion of nascent chains at the exit of the ribosomal tunnel. This is Large ribosomal subunit protein uL18 (RPL5) from Solanum melongena (Eggplant).